We begin with the raw amino-acid sequence, 614 residues long: Sulfite reductase [NADPH] flavoprotein alpha-component (614 aa).

Positions 79–217 (LTIIFASQTG…AATEWRKQVL (139 aa)) constitute a Flavodoxin-like domain. FMN contacts are provided by residues 85–90 (SQTGNA), 132–135 (STNG), and 168–177 (LGDSSYQFFC). One can recognise an FAD-binding FR-type domain in the interval 249–463 (EQPYTASLST…VEHNNNFKLP (215 aa)). FAD contacts are provided by residues threonine 337, threonine 371, 401–404 (RLYS), 419–421 (TVG), tyrosine 425, and 434–437 (GGAS). NADP(+) contacts are provided by residues 534-535 (SR), 540-544 (KVYVQ), and aspartate 576. Tyrosine 614 lines the FAD pocket.

Belongs to the NADPH-dependent sulphite reductase flavoprotein subunit CysJ family. The protein in the N-terminal section; belongs to the flavodoxin family. This sequence in the C-terminal section; belongs to the flavoprotein pyridine nucleotide cytochrome reductase family. In terms of assembly, alpha(8)-beta(8). The alpha component is a flavoprotein, the beta component is a hemoprotein. FAD is required as a cofactor. FMN serves as cofactor.

The catalysed reaction is hydrogen sulfide + 3 NADP(+) + 3 H2O = sulfite + 3 NADPH + 4 H(+). It participates in sulfur metabolism; hydrogen sulfide biosynthesis; hydrogen sulfide from sulfite (NADPH route): step 1/1. In terms of biological role, component of the sulfite reductase complex that catalyzes the 6-electron reduction of sulfite to sulfide. This is one of several activities required for the biosynthesis of L-cysteine from sulfate. The flavoprotein component catalyzes the electron flow from NADPH -&gt; FAD -&gt; FMN to the hemoprotein component. This is Sulfite reductase [NADPH] flavoprotein alpha-component from Vibrio cholerae serotype O1 (strain ATCC 39541 / Classical Ogawa 395 / O395).